A 321-amino-acid chain; its full sequence is Probable endolytic peptidoglycan transglycosylase RlpA (321 aa).

Belongs to the RlpA family.

Functionally, lytic transglycosylase with a strong preference for naked glycan strands that lack stem peptides. This Synechocystis sp. (strain ATCC 27184 / PCC 6803 / Kazusa) protein is Probable endolytic peptidoglycan transglycosylase RlpA.